A 150-amino-acid chain; its full sequence is PTTG1IP family member 2 (150 aa).

The signal sequence occupies residues 1–19; that stretch reads MCWLRAWSHILLPVFLSVA. At 20–98 the chain is on the extracellular side; sequence LIQLIFNLSD…SIFWANCNVD (79 aa). N26 carries an N-linked (GlcNAc...) asparagine glycan. A helical membrane pass occupies residues 99–119; that stretch reads LFGIVMLILIVILALAFLWYC. At 120-150 the chain is on the cytoplasmic side; it reads LAYYFYMQQHMALYARHGQVPVYNWDAPGDW.

It localises to the membrane. The chain is PTTG1IP family member 2 from Mus musculus (Mouse).